The following is a 389-amino-acid chain: tRNA-specific 2-thiouridylase MnmA (389 aa).

ATP contacts are provided by residues 30–37 (GLSGGVDS) and Leu56. The Nucleophile role is filled by Cys117. A disulfide bond links Cys117 and Cys216. Gly142 serves as a coordination point for ATP. The interaction with tRNA stretch occupies residues 166–168 (KDQ). Catalysis depends on Cys216, which acts as the Cysteine persulfide intermediate. The tract at residues 321 to 322 (RY) is interaction with tRNA.

This sequence belongs to the MnmA/TRMU family.

It is found in the cytoplasm. It carries out the reaction S-sulfanyl-L-cysteinyl-[protein] + uridine(34) in tRNA + AH2 + ATP = 2-thiouridine(34) in tRNA + L-cysteinyl-[protein] + A + AMP + diphosphate + H(+). Catalyzes the 2-thiolation of uridine at the wobble position (U34) of tRNA, leading to the formation of s(2)U34. This chain is tRNA-specific 2-thiouridylase MnmA, found in Synechococcus sp. (strain CC9902).